The primary structure comprises 930 residues: Isoleucine--tRNA ligase (930 aa).

The 'HIGH' region motif lies at 57-67 (PYANGNIHVGH). Position 554 (Glu554) interacts with L-isoleucyl-5'-AMP. Residues 595 to 599 (KMSKS) carry the 'KMSKS' region motif. Lys598 serves as a coordination point for ATP. Residues Cys888, Cys891, Cys908, and Cys911 each contribute to the Zn(2+) site.

The protein belongs to the class-I aminoacyl-tRNA synthetase family. IleS type 1 subfamily. Monomer. Zn(2+) is required as a cofactor.

It localises to the cytoplasm. The catalysed reaction is tRNA(Ile) + L-isoleucine + ATP = L-isoleucyl-tRNA(Ile) + AMP + diphosphate. Catalyzes the attachment of isoleucine to tRNA(Ile). As IleRS can inadvertently accommodate and process structurally similar amino acids such as valine, to avoid such errors it has two additional distinct tRNA(Ile)-dependent editing activities. One activity is designated as 'pretransfer' editing and involves the hydrolysis of activated Val-AMP. The other activity is designated 'posttransfer' editing and involves deacylation of mischarged Val-tRNA(Ile). This is Isoleucine--tRNA ligase from Streptococcus mutans serotype c (strain ATCC 700610 / UA159).